A 359-amino-acid polypeptide reads, in one-letter code: UPF0283 membrane protein R01807 (359 aa).

The next 2 helical transmembrane spans lie at 76–96 and 109–129; these read FGKI…GLWI and WLGY…LIVV.

The protein belongs to the UPF0283 family.

The protein resides in the cell inner membrane. The protein is UPF0283 membrane protein R01807 of Rhizobium meliloti (strain 1021) (Ensifer meliloti).